A 467-amino-acid polypeptide reads, in one-letter code: MSPYLAAEDLSMFGTDPWWLVVIKAVFCFAFLMVTVLFSIVWERKVVAWMQLRIGPNRHGPWGMLQSLADGIKLMLKEDVIVKRADKAVYVLAPIVAAIPAFMAIAVIPFGPAGNEVSIFGHRTAMQLTDLPIAMLFILAVASVGIYGIVLAGWSSGSTYPLLGGLRSCAQMISYEIAMGAAFASVFLYSGSMSTSEIVAQQDDRWYIVLLPVSFILYIVTMVGETNRAPFDMPESEGDLVGGFNTEYSSIKFAMFMLAEYVNMVTVSAVATTLFLGGWRAPWPISTFWEGANHGWWPLLWFVVKVQLLLFFFIWLRGTLPRVRYDQLMKLGWKVLIPVSLVWLMLVATVRALRNENYGFSDIALYIGGGVLVLLLLSFLVDMYRDKGGKAADQPAETGTGTGTGTETAFDPMAGGFPVPPMPGQQVPPVPRRRPRRERELIVSGGPDTHSDGPAGGPTDGKEASDG.

Transmembrane regions (helical) follow at residues 18–38 (WWLVVIKAVFCFAFLMVTVLF), 88–108 (AVYVLAPIVAAIPAFMAIAVI), 131–151 (LPIAMLFILAVASVGIYGIVL), 172–192 (MISYEIAMGAAFASVFLYSGS), 206–226 (WYIVLLPVSFILYIVTMVGET), 256–276 (FMLAEYVNMVTVSAVATTLFL), 296–316 (WWPLLWFVVKVQLLLFFFIWL), 328–348 (LMKLGWKVLIPVSLVWLMLVA), and 363–383 (IALYIGGGVLVLLLLSFLVDM). Residues 389–467 (GKAADQPAET…PTDGKEASDG (79 aa)) form a disordered region. Over residues 418-430 (PVPPMPGQQVPPV) the composition is skewed to pro residues.

Belongs to the complex I subunit 1 family. In terms of assembly, NDH-1 is composed of 14 different subunits. Subunits NuoA, H, J, K, L, M, N constitute the membrane sector of the complex.

The protein localises to the cell membrane. The enzyme catalyses a quinone + NADH + 5 H(+)(in) = a quinol + NAD(+) + 4 H(+)(out). NDH-1 shuttles electrons from NADH, via FMN and iron-sulfur (Fe-S) centers, to quinones in the respiratory chain. The immediate electron acceptor for the enzyme in this species is believed to be ubiquinone. Couples the redox reaction to proton translocation (for every two electrons transferred, four hydrogen ions are translocated across the cytoplasmic membrane), and thus conserves the redox energy in a proton gradient. This subunit may bind ubiquinone. This Streptomyces coelicolor (strain ATCC BAA-471 / A3(2) / M145) protein is NADH-quinone oxidoreductase subunit H.